The following is a 51-amino-acid chain: Large ribosomal subunit protein eL39 (51 aa).

Residues lysine 32 to lysine 51 are disordered. Positions glycine 33–lysine 51 are enriched in basic residues.

Belongs to the eukaryotic ribosomal protein eL39 family.

The protein is Large ribosomal subunit protein eL39 of Methanococcus maripaludis (strain C5 / ATCC BAA-1333).